The chain runs to 271 residues: uncharacterized protein (271 aa).

A disordered region spans residues 1 to 202 (MLNSPGTRRP…APSSALSHQG (202 aa)). Residues 10-23 (PVKEAQKYGEDSQK) show a composition bias toward basic and acidic residues. 2 stretches are compositionally biased toward low complexity: residues 33-50 (RSSVTTLSASALSDSSSP) and 59-73 (GRPSTPARAPATSAP). The span at 92-101 (TRSSANQLPQ) shows a compositional bias: polar residues. A compositionally biased stretch (basic residues) spans 121–142 (LRRRSHGDRCVPRSRRRPRPRP).

This is an uncharacterized protein from Homo sapiens (Human).